We begin with the raw amino-acid sequence, 313 residues long: Probable GTP 3',8-cyclase (313 aa).

The Radical SAM core domain occupies 4 to 224; it reads VYGRELEDLR…EIRNKHKRPR (221 aa). Arg-13 is a binding site for GTP. [4Fe-4S] cluster contacts are provided by Cys-20, Cys-24, and Cys-27. Lys-60 contacts GTP. Position 64 (Gly-64) interacts with S-adenosyl-L-methionine. Residue Thr-90 participates in GTP binding. Position 114 (Ser-114) interacts with S-adenosyl-L-methionine. Lys-151 is a GTP binding site. [4Fe-4S] cluster is bound by residues Cys-244 and Cys-247. 249 to 251 contributes to the GTP binding site; that stretch reads RIR. Residue Cys-261 participates in [4Fe-4S] cluster binding.

It belongs to the radical SAM superfamily. MoaA family. The cofactor is [4Fe-4S] cluster.

It catalyses the reaction GTP + AH2 + S-adenosyl-L-methionine = (8S)-3',8-cyclo-7,8-dihydroguanosine 5'-triphosphate + 5'-deoxyadenosine + L-methionine + A + H(+). It participates in cofactor biosynthesis; molybdopterin biosynthesis. Its function is as follows. Catalyzes the cyclization of GTP to (8S)-3',8-cyclo-7,8-dihydroguanosine 5'-triphosphate. The sequence is that of Probable GTP 3',8-cyclase from Sulfolobus acidocaldarius (strain ATCC 33909 / DSM 639 / JCM 8929 / NBRC 15157 / NCIMB 11770).